We begin with the raw amino-acid sequence, 53 residues long: Large ribosomal subunit protein eL24 (53 aa).

Zn(2+) contacts are provided by Cys-4, Cys-7, Cys-30, and Cys-34. The segment at 4–34 (CSFCNKEIEEGTGKMYVKKDGSIYFFCSSKC) adopts a C4-type zinc-finger fold.

It belongs to the eukaryotic ribosomal protein eL24 family. Part of the 50S ribosomal subunit. Forms a cluster with proteins L3 and L14. Zn(2+) is required as a cofactor.

Functionally, binds to the 23S rRNA. This is Large ribosomal subunit protein eL24 from Methanobrevibacter smithii (strain ATCC 35061 / DSM 861 / OCM 144 / PS).